Reading from the N-terminus, the 2110-residue chain is Protein Ycf2 (2110 aa).

Residues 190-209 form a disordered region; it reads DSSQLKGSSDQSRDPLDSIS. 1442-1449 contributes to the ATP binding site; the sequence is GSIGTGRS.

The protein belongs to the Ycf2 family.

The protein resides in the plastid. It is found in the chloroplast stroma. Its function is as follows. Probable ATPase of unknown function. Its presence in a non-photosynthetic plant (Epifagus virginiana) and experiments in tobacco indicate that it has an essential function which is probably not related to photosynthesis. This Panax ginseng (Korean ginseng) protein is Protein Ycf2.